Reading from the N-terminus, the 253-residue chain is Ribosomal RNA small subunit methyltransferase A (253 aa).

6 residues coordinate S-adenosyl-L-methionine: histidine 12, leucine 14, glycine 39, glutamate 60, aspartate 81, and asparagine 104.

The protein belongs to the class I-like SAM-binding methyltransferase superfamily. rRNA adenine N(6)-methyltransferase family. RsmA subfamily.

The protein localises to the cytoplasm. It carries out the reaction adenosine(1518)/adenosine(1519) in 16S rRNA + 4 S-adenosyl-L-methionine = N(6)-dimethyladenosine(1518)/N(6)-dimethyladenosine(1519) in 16S rRNA + 4 S-adenosyl-L-homocysteine + 4 H(+). Its function is as follows. Specifically dimethylates two adjacent adenosines (A1518 and A1519) in the loop of a conserved hairpin near the 3'-end of 16S rRNA in the 30S particle. May play a critical role in biogenesis of 30S subunits. In Paracidovorax citrulli (strain AAC00-1) (Acidovorax citrulli), this protein is Ribosomal RNA small subunit methyltransferase A.